Here is a 285-residue protein sequence, read N- to C-terminus: Large ribosomal subunit protein uL1m (285 aa).

The N-terminal 19 residues, methionine 1–cysteine 19, are a transit peptide targeting the mitochondrion.

Belongs to the universal ribosomal protein uL1 family. As to quaternary structure, component of the mitochondrial large ribosomal subunit (mt-LSU). Mature yeast 74S mitochondrial ribosomes consist of a small (37S) and a large (54S) subunit. The 37S small subunit contains a 15S ribosomal RNA (15S mt-rRNA) and 34 different proteins. The 54S large subunit contains a 21S rRNA (21S mt-rRNA) and 46 different proteins.

Its subcellular location is the mitochondrion. Functionally, component of the mitochondrial ribosome (mitoribosome), a dedicated translation machinery responsible for the synthesis of mitochondrial genome-encoded proteins, including at least some of the essential transmembrane subunits of the mitochondrial respiratory chain. The mitoribosomes are attached to the mitochondrial inner membrane and translation products are cotranslationally integrated into the membrane. This chain is Large ribosomal subunit protein uL1m (MRPL1), found in Saccharomyces cerevisiae (strain ATCC 204508 / S288c) (Baker's yeast).